Consider the following 113-residue polypeptide: CRISPR-associated endoribonuclease Cas2 2 (113 aa).

Position 32 (Asp32) interacts with Mg(2+).

It belongs to the CRISPR-associated endoribonuclease Cas2 protein family. Homodimer, forms a heterotetramer with a Cas1 homodimer. It depends on Mg(2+) as a cofactor.

In terms of biological role, CRISPR (clustered regularly interspaced short palindromic repeat), is an adaptive immune system that provides protection against mobile genetic elements (viruses, transposable elements and conjugative plasmids). CRISPR clusters contain sequences complementary to antecedent mobile elements and target invading nucleic acids. CRISPR clusters are transcribed and processed into CRISPR RNA (crRNA). Functions as a ssRNA-specific endoribonuclease. Involved in the integration of spacer DNA into the CRISPR cassette. This is CRISPR-associated endoribonuclease Cas2 2 (cas22) from Nitrosomonas europaea (strain ATCC 19718 / CIP 103999 / KCTC 2705 / NBRC 14298).